The primary structure comprises 128 residues: Large ribosomal subunit protein eL22 (128 aa).

Thr-62 carries the phosphothreonine modification. Phosphoserine is present on Ser-66. Lys-69 bears the N6-succinyllysine mark.

Belongs to the eukaryotic ribosomal protein eL22 family. In terms of assembly, component of the large ribosomal subunit.

It is found in the cytoplasm. In terms of biological role, component of the large ribosomal subunit. The ribosome is a large ribonucleoprotein complex responsible for the synthesis of proteins in the cell. The polypeptide is Large ribosomal subunit protein eL22 (RPL22) (Sus scrofa (Pig)).